Consider the following 340-residue polypeptide: Flap endonuclease 1 (340 aa).

Positions 1–98 (MGVPIGEIIP…KELEKRREAR (98 aa)) are N-domain. Mg(2+) contacts are provided by aspartate 27, aspartate 80, glutamate 152, glutamate 154, aspartate 173, aspartate 175, and aspartate 236. Residues 116-258 (EARKYAQRAT…KALEIVRHSK (143 aa)) form an I-domain region. The segment at 330-338 (KQSTLESWF) is interaction with PCNA.

It belongs to the XPG/RAD2 endonuclease family. FEN1 subfamily. As to quaternary structure, interacts with PCNA. PCNA stimulates the nuclease activity without altering cleavage specificity. The cofactor is Mg(2+).

Structure-specific nuclease with 5'-flap endonuclease and 5'-3' exonuclease activities involved in DNA replication and repair. During DNA replication, cleaves the 5'-overhanging flap structure that is generated by displacement synthesis when DNA polymerase encounters the 5'-end of a downstream Okazaki fragment. Binds the unpaired 3'-DNA end and kinks the DNA to facilitate 5' cleavage specificity. Cleaves one nucleotide into the double-stranded DNA from the junction in flap DNA, leaving a nick for ligation. Also involved in the base excision repair (BER) pathway. Acts as a genome stabilization factor that prevents flaps from equilibrating into structures that lead to duplications and deletions. Also possesses 5'-3' exonuclease activity on nicked or gapped double-stranded DNA. This chain is Flap endonuclease 1, found in Pyrococcus furiosus (strain ATCC 43587 / DSM 3638 / JCM 8422 / Vc1).